A 265-amino-acid polypeptide reads, in one-letter code: ClpXP adapter protein SpxH (265 aa).

The protein belongs to the SpxH family. As to quaternary structure, interacts with Spx.

Its subcellular location is the cytoplasm. In terms of biological role, adapter protein required for efficient degradation of Spx by ClpXP under non-stress conditions. Interaction with Spx stabilizes Spx and exposes the C-terminus of Spx for recognition and proteolysis by ClpXP. This is ClpXP adapter protein SpxH from Staphylococcus haemolyticus (strain JCSC1435).